A 432-amino-acid polypeptide reads, in one-letter code: uncharacterized protein (432 aa).

A compositionally biased stretch (basic residues) spans 1–18; it reads MAIGDKRKKNRKNKQNKK. Disordered regions lie at residues 1–23, 37–56, and 122–168; these read MAIG…KNDN, NSNS…NGNG, and STNS…GSSL. Low complexity-rich tracts occupy residues 37-53, 122-147, and 154-168; these read NSNS…NNKN, STNS…QQQQ, and ESQS…GSSL. A coiled-coil region spans residues 181–226; sequence LNDQLKIVQLEQKIVNLEKEIQRMRNEQNQIHKQNLNQYHELLKQI. Disordered regions lie at residues 270 to 290 and 310 to 432; these read VQPV…KSNG and SSKF…STLR. The segment covering 274–288 has biased composition (low complexity); that stretch reads STPSSSSNSLASKKS. Polar residues predominate over residues 311–324; that stretch reads SKFAQSNSSPSRVN. A compositionally biased stretch (low complexity) spans 352-378; the sequence is KKSATTTTTSSSSNNATTTTAKGSTST. Positions 383–414 are enriched in polar residues; the sequence is ITNSNNIKNSVLSPKSITKPNTPSNIIFSPLS.

This is an uncharacterized protein from Dictyostelium discoideum (Social amoeba).